A 244-amino-acid chain; its full sequence is MKKRFIYHDEKSNKFWWIDYEGDSLAVNYGKVGSIGKFQTKEFDNEEQCLKEASKLIAAKMKKGYQEDPKFNFMDRYYFDDEEIGLHVKTSHPNFQCHFTDPLYMCCWDEESPFGSDEGADALNVLENSLRKEPDLDCADFPQMLIETMWGMKYIAMDSILEEDVRAQLLVDEMSTIQSNMITYATAFGQIKVMGKISHKLKKMGLNALARHQLTAKILQWGDGQDSPILQKMIDDLTAFPHEN.

The region spanning 1–78 (MKKRFIYHDE…PKFNFMDRYY (78 aa)) is the WGR domain.

This is an uncharacterized protein from Escherichia coli (strain K12).